Consider the following 129-residue polypeptide: Succinate dehydrogenase assembly factor 3, mitochondrial (129 aa).

Residues 1-21 (MQVNHLLRQAVKQTTRAGRLG) constitute a mitochondrion transit peptide.

Belongs to the complex I LYR family. SDHAF3 subfamily. As to quaternary structure, interacts with the iron-sulfur protein subunit within the SDH catalytic dimer.

The protein resides in the mitochondrion matrix. Its function is as follows. Plays an essential role in the assembly of succinate dehydrogenase (SDH), an enzyme complex (also referred to as respiratory complex II) that is a component of both the tricarboxylic acid (TCA) cycle and the mitochondrial electron transport chain, and which couples the oxidation of succinate to fumarate with the reduction of ubiquinone (coenzyme Q) to ubiquinol. Promotes maturation of the iron-sulfur protein subunit of the SDH catalytic dimer, protecting it from the deleterious effects of oxidants. May act together with SDHAF1. The protein is Succinate dehydrogenase assembly factor 3, mitochondrial of Kluyveromyces lactis (strain ATCC 8585 / CBS 2359 / DSM 70799 / NBRC 1267 / NRRL Y-1140 / WM37) (Yeast).